A 357-amino-acid polypeptide reads, in one-letter code: Peptide chain release factor 1 (357 aa).

Glutamine 235 is modified (N5-methylglutamine). Residues 285 to 305 (KRHNEASAMRSAQVGSGDRSE) form a disordered region.

Belongs to the prokaryotic/mitochondrial release factor family. Post-translationally, methylated by PrmC. Methylation increases the termination efficiency of RF1.

The protein resides in the cytoplasm. Functionally, peptide chain release factor 1 directs the termination of translation in response to the peptide chain termination codons UAG and UAA. The sequence is that of Peptide chain release factor 1 (prfA) from Chlamydia pneumoniae (Chlamydophila pneumoniae).